The sequence spans 492 residues: GTPase Der (492 aa).

Residues 3–166 enclose the EngA-type G 1 domain; that stretch reads PVIALVGRPN…AVLGIFPKDA (164 aa). Residues 9–16, 56–60, and 118–121 contribute to the GTP site; these read GRPNVGKS, DTGGI, and NKVD. Residues 166 to 190 form a disordered region; it reads AGEPEEGAEAEEEVQEGQEAKRIPG. Over residues 168–181 the composition is skewed to acidic residues; sequence EPEEGAEAEEEVQE. The region spanning 197–370 is the EngA-type G 2 domain; it reads IKLAIIGRPN…SVQAAFHSAV (174 aa). Residues 203-210, 250-254, and 315-318 each bind GTP; these read GRPNVGKS, DTAGV, and NKWD. The KH-like domain occupies 371-455; the sequence is TRWPTSRLTQ…PIRIEYKGGE (85 aa). The interval 453–492 is disordered; it reads GGENPYEGNKNKLTDRQVNKKRRLMSHHKKAEKKRKDKRK. Residues 461 to 470 show a composition bias toward basic and acidic residues; the sequence is NKNKLTDRQV. Basic residues predominate over residues 471–492; sequence NKKRRLMSHHKKAEKKRKDKRK.

This sequence belongs to the TRAFAC class TrmE-Era-EngA-EngB-Septin-like GTPase superfamily. EngA (Der) GTPase family. As to quaternary structure, associates with the 50S ribosomal subunit.

Its function is as follows. GTPase that plays an essential role in the late steps of ribosome biogenesis. The chain is GTPase Der from Ectopseudomonas mendocina (strain ymp) (Pseudomonas mendocina).